The following is a 206-amino-acid chain: Isochorismatase domain-containing protein 2A (206 aa).

K26 carries the N6-succinyllysine modification. N6-acetyllysine; alternate occurs at positions 93 and 178. N6-succinyllysine; alternate occurs at positions 93 and 178. An N6-acetyllysine mark is found at K182 and K185.

The protein belongs to the isochorismatase family. Interacts with CDKN2A. In terms of tissue distribution, ubiquitous. Expressed predominantly in uterus, stomach and urinary tract.

It is found in the cytoplasm. Its subcellular location is the nucleus. The protein is Isochorismatase domain-containing protein 2A of Mus musculus (Mouse).